The chain runs to 305 residues: Probable cell division protein WhiA (305 aa).

The H-T-H motif DNA-binding region spans threonine 269–lysine 302.

Belongs to the WhiA family.

Functionally, involved in cell division and chromosome segregation. The chain is Probable cell division protein WhiA from Lactococcus lactis subsp. cremoris (strain MG1363).